The primary structure comprises 385 residues: Interleukin-13 receptor subunit alpha-2 (385 aa).

Residues 1–23 (MALMAVNTRCLCLFLLCTITGHS) form the signal peptide. Topologically, residues 24–336 (LEIKVNPPQD…WEGYTGPDSK (313 aa)) are extracellular. Fibronectin type-III domains lie at 30 to 130 (PPQD…ADEG), 133 to 221 (GTKI…PIRS), and 236 to 334 (PPEF…TGPD). Cysteines 61 and 109 form a disulfide. A glycan (N-linked (GlcNAc...) asparagine) is linked at Asn-111. Cys-141 and Cys-151 form a disulfide bridge. Asn-164 carries an N-linked (GlcNAc...) asparagine glycan. A disulfide bridge connects residues Cys-180 and Cys-193. N-linked (GlcNAc...) asparagine glycans are attached at residues Asn-211 and Asn-295. Cys-265 and Cys-312 are oxidised to a cystine. A WSXWS motif motif is present at residues 318 to 322 (WSEWS). The chain crosses the membrane as a helical span at residues 337–357 (IVFIVPVCLFFIFLLLLLCLI). At 358 to 385 (VEKEDPEPTLSLHVDLNKEMYAYEETLC) the chain is on the cytoplasmic side.

This sequence belongs to the type I cytokine receptor family. Type 5 subfamily. Interacts with IL4RA. Interacts with high affinity to interleukin-13 (IL13), but not to interleukin-4 (IL4). Cleaved by MMP8 leading to a soluble form that is also able to interact with IL13.

It localises to the cell membrane. Its function is as follows. Cell surface receptor that plays a role in the regulation of IL-13-mediated responses. Functions as a decoy receptor that inhibits IL-13- and IL-4-mediated signal transduction via the JAK-STAT pathway and thereby modulates immune responses and inflammation. Serves as a functional signaling receptor for IL-13 in an alternative pathway involving AP-1 ultimately leading to the production of TGFB1. The sequence is that of Interleukin-13 receptor subunit alpha-2 (Il13ra2) from Rattus norvegicus (Rat).